We begin with the raw amino-acid sequence, 314 residues long: Testis-specific Y-encoded protein 4 (314 aa).

It belongs to the nucleosome assembly protein (NAP) family.

It is found in the cytoplasm. It localises to the nucleus. May be involved in sperm differentiation and proliferation. The sequence is that of Testis-specific Y-encoded protein 4 (TSPY4) from Homo sapiens (Human).